Consider the following 234-residue polypeptide: Isoprenyl transferase (234 aa).

D13 is an active-site residue. D13 lines the Mg(2+) pocket. Substrate is bound by residues 14-17 (GNGR), W18, R26, H30, and 58-60 (STE). The active-site Proton acceptor is the N61. Residues W62, R64, R180, and 186-188 (RLS) each bind substrate. Mg(2+) is bound at residue E199.

Belongs to the UPP synthase family. In terms of assembly, homodimer. It depends on Mg(2+) as a cofactor.

Functionally, catalyzes the condensation of isopentenyl diphosphate (IPP) with allylic pyrophosphates generating different type of terpenoids. The chain is Isoprenyl transferase from Helicobacter pylori (strain J99 / ATCC 700824) (Campylobacter pylori J99).